A 650-amino-acid chain; its full sequence is Acetyl-coenzyme A synthetase (650 aa).

Residues 191–194, threonine 311, and asparagine 335 contribute to the CoA site; that span reads RGGR. Residues 387–389, 411–416, aspartate 501, and arginine 516 each bind ATP; these read GEP and DTWWQT. Position 524 (serine 524) interacts with CoA. Residue arginine 527 coordinates ATP. Residues valine 538, histidine 540, and isoleucine 543 each coordinate Mg(2+). Residue arginine 585 participates in CoA binding. Lysine 610 bears the N6-acetyllysine mark.

Belongs to the ATP-dependent AMP-binding enzyme family. Requires Mg(2+) as cofactor. Post-translationally, acetylated. Deacetylation by the SIR2-homolog deacetylase activates the enzyme.

The enzyme catalyses acetate + ATP + CoA = acetyl-CoA + AMP + diphosphate. Its function is as follows. Catalyzes the conversion of acetate into acetyl-CoA (AcCoA), an essential intermediate at the junction of anabolic and catabolic pathways. AcsA undergoes a two-step reaction. In the first half reaction, AcsA combines acetate with ATP to form acetyl-adenylate (AcAMP) intermediate. In the second half reaction, it can then transfer the acetyl group from AcAMP to the sulfhydryl group of CoA, forming the product AcCoA. The protein is Acetyl-coenzyme A synthetase of Vibrio vulnificus (strain YJ016).